A 163-amino-acid polypeptide reads, in one-letter code: Seed allergenic protein RAG1 (163 aa).

The first 27 residues, 1 to 27, serve as a signal peptide directing secretion; that stretch reads MASNKVVFSVLLLVVLSVLAAAMATMA. Disulfide bonds link cysteine 39-cysteine 90, cysteine 53-cysteine 78, cysteine 61-cysteine 122, cysteine 79-cysteine 138, and cysteine 92-cysteine 150.

It belongs to the cereal trypsin/alpha-amylase inhibitor family. Five disulfide bonds are present.

The protein localises to the secreted. Its function is as follows. Seed storage protein. The chain is Seed allergenic protein RAG1 (RAG1) from Oryza sativa subsp. japonica (Rice).